Consider the following 266-residue polypeptide: tRNA pseudouridine synthase A (266 aa).

The active-site Nucleophile is the aspartate 57. Residue tyrosine 115 coordinates substrate.

Belongs to the tRNA pseudouridine synthase TruA family. In terms of assembly, homodimer.

It carries out the reaction uridine(38/39/40) in tRNA = pseudouridine(38/39/40) in tRNA. In terms of biological role, formation of pseudouridine at positions 38, 39 and 40 in the anticodon stem and loop of transfer RNAs. The chain is tRNA pseudouridine synthase A from Buchnera aphidicola subsp. Acyrthosiphon pisum (strain APS) (Acyrthosiphon pisum symbiotic bacterium).